The chain runs to 158 residues: NADH-quinone oxidoreductase subunit B (158 aa).

[4Fe-4S] cluster is bound by residues cysteine 37, cysteine 38, cysteine 102, and cysteine 132.

This sequence belongs to the complex I 20 kDa subunit family. In terms of assembly, NDH-1 is composed of 14 different subunits. Subunits NuoB, C, D, E, F, and G constitute the peripheral sector of the complex. Requires [4Fe-4S] cluster as cofactor.

It localises to the cell inner membrane. The enzyme catalyses a quinone + NADH + 5 H(+)(in) = a quinol + NAD(+) + 4 H(+)(out). Functionally, NDH-1 shuttles electrons from NADH, via FMN and iron-sulfur (Fe-S) centers, to quinones in the respiratory chain. The immediate electron acceptor for the enzyme in this species is believed to be ubiquinone. Couples the redox reaction to proton translocation (for every two electrons transferred, four hydrogen ions are translocated across the cytoplasmic membrane), and thus conserves the redox energy in a proton gradient. This Halorhodospira halophila (strain DSM 244 / SL1) (Ectothiorhodospira halophila (strain DSM 244 / SL1)) protein is NADH-quinone oxidoreductase subunit B.